The primary structure comprises 233 residues: Protein Mis18-alpha (233 aa).

Residues Ser36, Ser39, and Ser40 each carry the phosphoserine modification. A Mis18 domain is found at 80–178 (PLVFLCSGCR…NVEAVESYVL (99 aa)). Zn(2+)-binding residues include Cys85, Cys88, Cys141, and Cys144. Lys162 is covalently cross-linked (Glycyl lysine isopeptide (Lys-Gly) (interchain with G-Cter in SUMO2)). Ser233 is modified (phosphoserine).

This sequence belongs to the mis18 family. In terms of assembly, homodimer, and heterodimer with OIP5/MIS18B. Identified in a complex containing MIS18A, OIP5/MIS18B, MIS18BP1, RBBP7 and RBBP4.

The protein resides in the nucleus. It is found in the chromosome. Its subcellular location is the centromere. Functionally, required for recruitment of CENPA to centromeres and normal chromosome segregation during mitosis. This Plecturocebus moloch (Dusky titi monkey) protein is Protein Mis18-alpha (MIS18A).